A 361-amino-acid polypeptide reads, in one-letter code: Phosphoribosylformylglycinamidine cyclo-ligase (361 aa).

This sequence belongs to the AIR synthase family.

Its subcellular location is the cytoplasm. It catalyses the reaction 2-formamido-N(1)-(5-O-phospho-beta-D-ribosyl)acetamidine + ATP = 5-amino-1-(5-phospho-beta-D-ribosyl)imidazole + ADP + phosphate + H(+). It functions in the pathway purine metabolism; IMP biosynthesis via de novo pathway; 5-amino-1-(5-phospho-D-ribosyl)imidazole from N(2)-formyl-N(1)-(5-phospho-D-ribosyl)glycinamide: step 2/2. The chain is Phosphoribosylformylglycinamidine cyclo-ligase from Bartonella quintana (strain Toulouse) (Rochalimaea quintana).